We begin with the raw amino-acid sequence, 276 residues long: NADPH-dependent 7-cyano-7-deazaguanine reductase (276 aa).

Residue 83–85 (IES) participates in substrate binding. Position 85 to 86 (85 to 86 (SK)) interacts with NADPH. The Thioimide intermediate role is filled by C184. Residue D191 is the Proton donor of the active site. 223 to 224 (HE) is a binding site for substrate. Residue 252 to 253 (RG) participates in NADPH binding.

Belongs to the GTP cyclohydrolase I family. QueF type 2 subfamily. As to quaternary structure, homodimer.

It localises to the cytoplasm. It carries out the reaction 7-aminomethyl-7-carbaguanine + 2 NADP(+) = 7-cyano-7-deazaguanine + 2 NADPH + 3 H(+). Its pathway is tRNA modification; tRNA-queuosine biosynthesis. In terms of biological role, catalyzes the NADPH-dependent reduction of 7-cyano-7-deazaguanine (preQ0) to 7-aminomethyl-7-deazaguanine (preQ1). This Pseudomonas savastanoi pv. phaseolicola (strain 1448A / Race 6) (Pseudomonas syringae pv. phaseolicola (strain 1448A / Race 6)) protein is NADPH-dependent 7-cyano-7-deazaguanine reductase.